Consider the following 1341-residue polypeptide: Restriction of telomere capping protein 1 (1341 aa).

Residues 1–39 (MSLSPHVENASIPKGSTPIPKNRNVSSIGKGEFLGSSSS) form a disordered region. WD repeat units follow at residues 207-248 (NKFS…SIDN), 256-296 (EHTR…SKSS), 305-342 (TASD…YKFA), 367-406 (AHTG…NAAE), 439-486 (NTGY…IPKH), and 489-527 (LSET…TVLE). Disordered regions lie at residues 559–593 (PELQ…IGGI), 600–619 (TGLT…GPTF), 630–651 (ASSF…ENRE), 736–765 (KNAT…DDDD), and 789–830 (NEKV…DRAR). Positions 630-644 (ASSFNSSSASLTSLT) are enriched in low complexity. A compositionally biased stretch (acidic residues) spans 753–765 (DDGDDDDDDDDDD). The segment covering 814 to 823 (SSISSISASR) has biased composition (low complexity). Residues 843-883 (KIQTLVDLISIATHNASVYLSIDDLTNFKIWILIRDSLLWD) form a WD 7 repeat. Disordered stretches follow at residues 941–962 (AFRA…KLKE) and 1013–1043 (DEHE…KSIP). Composition is skewed to basic and acidic residues over residues 951–962 (DAEKKPVSKLKE) and 1015–1027 (HEHQ…HDSP). Phosphoserine is present on residues serine 1036, serine 1080, serine 1087, serine 1089, serine 1123, and serine 1133. WD repeat units follow at residues 1129-1169 (SRPD…KQLY) and 1216-1255 (LFGI…LITN). Residues 1293-1335 (CVLCERPLKKLTMVILPCGHEGHFQCIQEWFLDENEQECPGGC) form an RING-type; degenerate zinc finger.

This sequence belongs to the WD repeat RTC1 family. As to quaternary structure, component of the SEA complex composed of at least IML1/SEA1, RTC1/SEA2, MTC5/SEA3, NPR2, NPR3, SEA4, SEC13 and SEH1. Interacts with ribosomes.

It is found in the vacuole membrane. Functionally, component of the SEA complex which coats the vacuolar membrane and is involved in intracellular trafficking, autophagy, response to nitrogen starvation, and amino acid biogenesis. May be involved in a process influencing telomere capping. The chain is Restriction of telomere capping protein 1 (RTC1) from Saccharomyces cerevisiae (strain ATCC 204508 / S288c) (Baker's yeast).